The chain runs to 490 residues: Probable glycine dehydrogenase (decarboxylating) subunit 2 (490 aa).

Lysine 273 bears the N6-(pyridoxal phosphate)lysine mark.

It belongs to the GcvP family. C-terminal subunit subfamily. The glycine cleavage system is composed of four proteins: P, T, L and H. In this organism, the P 'protein' is a heterodimer of two subunits. The cofactor is pyridoxal 5'-phosphate.

It carries out the reaction N(6)-[(R)-lipoyl]-L-lysyl-[glycine-cleavage complex H protein] + glycine + H(+) = N(6)-[(R)-S(8)-aminomethyldihydrolipoyl]-L-lysyl-[glycine-cleavage complex H protein] + CO2. Its function is as follows. The glycine cleavage system catalyzes the degradation of glycine. The P protein binds the alpha-amino group of glycine through its pyridoxal phosphate cofactor; CO(2) is released and the remaining methylamine moiety is then transferred to the lipoamide cofactor of the H protein. The protein is Probable glycine dehydrogenase (decarboxylating) subunit 2 of Staphylococcus aureus (strain MRSA252).